An 82-amino-acid polypeptide reads, in one-letter code: Capsid protein G8P (82 aa).

The first 29 residues, 1-29, serve as a signal peptide directing secretion; sequence MRVLSTVLAAKNKIALGAATMLVSAGSFA. Residues 30-54 lie on the Periplasmic side of the membrane; sequence AEPNAATNYATEAMDSLKTQAIDLI. The helical transmembrane segment at 55 to 74 threads the bilayer; the sequence is SQTWPVVTTVVVAGLVIRLF. Over 75–82 the chain is Cytoplasmic; it reads KKFSSKAV.

This sequence belongs to the inovirus capsid protein family. Homomultimerizes. There are several thousands of this protein in the phage capsid.

It is found in the virion. It localises to the host membrane. In terms of biological role, self assembles to form a helical capsid wrapping up the viral genomic DNA. The capsid displays a filamentous structure with a length of 760-1950 nm and a width of 6-8 nm. The virion assembly and budding take place at the host inner membrane. This Salmonella phage IKe (Bacteriophage IKe) protein is Capsid protein G8P (VIII).